The primary structure comprises 276 residues: Large ribosomal subunit protein uL2 (276 aa).

The disordered stretch occupies residues 225-276 (MNPNDHPHGGGEGRNPIGRNPVTPWGKPALGAKTRKKKNPSNRFIVKRRGKK). A compositionally biased stretch (basic residues) spans 257–276 (KTRKKKNPSNRFIVKRRGKK).

The protein belongs to the universal ribosomal protein uL2 family. Part of the 50S ribosomal subunit. Forms a bridge to the 30S subunit in the 70S ribosome.

In terms of biological role, one of the primary rRNA binding proteins. Required for association of the 30S and 50S subunits to form the 70S ribosome, for tRNA binding and peptide bond formation. It has been suggested to have peptidyltransferase activity; this is somewhat controversial. Makes several contacts with the 16S rRNA in the 70S ribosome. The chain is Large ribosomal subunit protein uL2 from Desulfitobacterium hafniense (strain DSM 10664 / DCB-2).